Reading from the N-terminus, the 219-residue chain is MNGPDTKIPQATAKRLPLYYRFIQSLYNSGKLRVSSAELSEAVKVDSATIRRDFSYFGALGKKGYGYNVQHLLTFFRKTLNQDEVTNVALIGVGHLGTAFANYNFLKNNSTRIVIAFDADEDKVGTTTQDVPIYHVSDMKEQIKANHVDVAILTVPSQFAQSVADELVEYGVTGILNFTPARLNVPAHVRVHHIDLSIELQSLVYFMKHYSQSAEGVKS.

A DNA-binding region (H-T-H motif) is located at residues 18–57; that stretch reads LYYRFIQSLYNSGKLRVSSAELSEAVKVDSATIRRDFSYF. 92 to 97 contributes to the NAD(+) binding site; sequence GVGHLG.

The protein belongs to the transcriptional regulatory Rex family. In terms of assembly, homodimer.

The protein localises to the cytoplasm. Functionally, modulates transcription in response to changes in cellular NADH/NAD(+) redox state. This is Redox-sensing transcriptional repressor Rex from Exiguobacterium sibiricum (strain DSM 17290 / CCUG 55495 / CIP 109462 / JCM 13490 / 255-15).